The primary structure comprises 202 residues: MADEYLVPLDQYLAAGVHIGTQQKTKDMKKFIYRVRQDGLYVLDVRKTDERLKVAGKFLARFDPQSILAVSVRLYGQKPVKKFGEVTGARAIPGRFLPGTMTNPAVKNFFEPDVIIITDPRADHQAMKEAIEIGIPIVALVDTENLLSYVDLAIPTNNKGRKALALIYWILAREILYNRGEISSREEFKIPVEEFEMKIVRR.

It belongs to the universal ribosomal protein uS2 family.

This Pyrococcus abyssi (strain GE5 / Orsay) protein is Small ribosomal subunit protein uS2 (rps2).